A 1547-amino-acid polypeptide reads, in one-letter code: MSFMDQIPGGGNYPKLPVECLPNFPIQPSLTFRGRNDSHKLKNFISEIMLNMSMISWPNDASRIVYCRRHLLNPAAQWANDFVQEQGILEITFDTFIQGLYQHFYKPPDINKIFNAITQLSEAKLGIERLNQRFRKIWDRMPPDFMTEKAAIMTYTRLLTKETYNIVRMHKPETLKDAMEEAYQTTALTERFFPGFELDADGDTIIGATTHLQEEYDSDYDSEDNLTQNGYVHTVRTRRSYNKPMSNHRNRRNNNPSREECIKNRLCFYCKKEGHRLNECRARKAVLTDLELESKDQQTPFIKTLPIVHYIAIPEMDNTAEKTIKIQNTKVKTLFDSGSPTSFIRRDIVELLKYEIYETPPLRFRGFVATKSAVTSEAVTIDLKINDLHITLAAYILDNMDYQLLIGNPILRRYPKILHTVLNTRESPDSLKPKTYRSETVNNVRTYSAGNRGNPRNIKLSFAPTILEATDPKSAGNRGDSRTKTLSLATTTPAAIDPLTTLDNPGSTQSTFAQFPIPEEASILEEDGKYSNVVSTIQSVEPNATDHSNKDTFCTLPVWLQQKYREIIRNDLPPRPADINNIPVKHDIEIKPGARLPRLQPYHVTEKNEQEINKIVQKLLDNKFIVPSKSPCSSPVVLVPKKDGTFRLCVDYRTLNKATISDPFPLPRIDNLLSRIGNAQIFTTLDLHSGYHQIPMEPKDRYKTAFVTPSGKYEYTVMPFGLVNAPSTFARYMADTFRDLRFVNVYLDDILIFSESPEEHWKHLDTVLERLKNENLIVKKKKCKFASEETEFLGYSIGIQKIAPLQHKCAAIRDFPTPKTVKQAQRFLGMINYYRRFIPNCSKIAQPIQLFICDKSQWTEKQDKAIDKLKDALCNSPVLVPFNNKANYRLTTDASKDGIGAVLEEVDNKNKLVGVVGYFSKSLESAQKNYPAGELELLGIIKALHHFRYMLHGKHFTLRTDHISLLSLQNKNEPARRVQRWLDDLATYDFTLEYLAGPKNVVADAISRAVYTITPETSRPIDTESWKSYYKSDPLCSAVLIHMKELTQHNVTPEDMSAFRSYQKKLELSETFRKNYSLEDEMIYYQDRLVVPIKQQNAVMRLYHDHTLFGGHFGVTVTLAKISPIYYWPKLQHSIIQYIRTCVQCQLIKSHRPRLHGLLQPLPIAEGRWLDISMDFVTGLPPTSNNLNMILVVVDRFSKRAHFIATRKTLDATQLIDLLFRYIFSYHGFPRTITSDRDVRMTADKYQELTKRLGIKSTMSSANHPQTDGQSERTIQTLNRLLRAYASTNIQNWHVYLPQIEFVYNSTPTRTLGKSPFEIDLGYLPNTPAIKSDDEVNARSFTAVELAKHLKALTIQTKEQLEHAQIEMETNNNQRRKPLLLNIGDHVLVHRDAYFKKGAYMKVQQIYVGPFRVVKKINDNAYELDLNSHKKKHRVINVQFLKKFVYRPDAYPKNKPISSTERIKRAHEVTALIGIDTTHKTYLCHMQDVDPTLSVEYSEAEFCQIPERTRRSILANFRQLYETQDNPEREEDVVSQNEICQYDNTSP.

N-acetylserine is present on Ser2. A CCHC-type zinc finger spans residues 265 to 282; it reads RLCFYCKKEGHRLNECRA. The active-site For protease activity; shared with dimeric partner is Asp336. One can recognise a Reverse transcriptase domain in the interval 620–797; sequence LDNKFIVPSK…EETEFLGYSI (178 aa). Mg(2+)-binding residues include Asp686, Asp748, Asp749, Asp893, Glu936, and Asp961. An RNase H Ty3/gyspy-type domain is found at 893–1011; it reads DASKDGIGAV…VADAISRAVY (119 aa). The segment at 1106–1145 is integrase-type zinc finger-like; sequence HTLFGGHFGVTVTLAKISPIYYWPKLQHSIIQYIRTCVQC. The region spanning 1159–1324 is the Integrase catalytic domain; that stretch reads LQPLPIAEGR…SPFEIDLGYL (166 aa). Residues Asp1175 and Asp1236 each contribute to the Mg(2+) site.

The protease is a homodimer, whose active site consists of two apposed aspartic acid residues. Post-translationally, initially, virus-like particles (VLPs) are composed of the structural unprocessed proteins Gag and Gag-Pol, and also contain the host initiator methionine tRNA (tRNA(i)-Met) which serves as a primer for minus-strand DNA synthesis, and a dimer of genomic Ty RNA. Processing of the polyproteins occurs within the particle and proceeds by an ordered pathway, called maturation. First, the protease (PR) is released by autocatalytic cleavage of the Gag-Pol polyprotein, and this cleavage is a prerequisite for subsequent processing at the remaining sites to release the mature structural and catalytic proteins. Maturation takes place prior to the RT reaction and is required to produce transposition-competent VLPs.

The protein localises to the cytoplasm. It localises to the nucleus. The catalysed reaction is DNA(n) + a 2'-deoxyribonucleoside 5'-triphosphate = DNA(n+1) + diphosphate. The enzyme catalyses Endonucleolytic cleavage to 5'-phosphomonoester.. Functionally, capsid protein (CA) is the structural component of the virus-like particle (VLP), forming the shell that encapsulates the genomic RNA-nucleocapsid complex. Nucleocapsid protein p11 (NC) forms the nucleocore that coats the retro-elements dimeric RNA. Binds these RNAs through its zinc fingers. Promotes primer tRNA(i)-Met annealing to the multipartite primer-binding site (PBS), dimerization of Ty3 RNA and initiation of reverse transcription. In terms of biological role, the aspartyl protease (PR) mediates the proteolytic cleavages of the Gag and Gag-Pol polyproteins after assembly of the VLP. Its function is as follows. Reverse transcriptase/ribonuclease H (RT) is a multifunctional enzyme that catalyzes the conversion of the retro-elements RNA genome into dsDNA within the VLP. The enzyme displays a DNA polymerase activity that can copy either DNA or RNA templates, and a ribonuclease H (RNase H) activity that cleaves the RNA strand of RNA-DNA heteroduplexes during plus-strand synthesis and hydrolyzes RNA primers. The conversion leads to a linear dsDNA copy of the retrotransposon that includes long terminal repeats (LTRs) at both ends. Functionally, integrase (IN) targets the VLP to the nucleus, where a subparticle preintegration complex (PIC) containing at least integrase and the newly synthesized dsDNA copy of the retrotransposon must transit the nuclear membrane. Once in the nucleus, integrase performs the integration of the dsDNA into the host genome. The sequence is that of Transposon Ty3-G Gag-Pol polyprotein (TY3B-G) from Saccharomyces cerevisiae (strain ATCC 204508 / S288c) (Baker's yeast).